The sequence spans 287 residues: Nitrogenase iron protein (287 aa).

Glycine 8–serine 15 serves as a coordination point for ATP. Position 96 (cysteine 96) interacts with [4Fe-4S] cluster. ADP-ribosylarginine; by dinitrogenase reductase ADP-ribosyltransferase is present on arginine 99. Residue cysteine 130 coordinates [4Fe-4S] cluster.

Belongs to the NifH/BchL/ChlL family. As to quaternary structure, homodimer. Requires [4Fe-4S] cluster as cofactor. In terms of processing, the reversible ADP-ribosylation of Arg-99 inactivates the nitrogenase reductase and regulates nitrogenase activity.

The enzyme catalyses N2 + 8 reduced [2Fe-2S]-[ferredoxin] + 16 ATP + 16 H2O = H2 + 8 oxidized [2Fe-2S]-[ferredoxin] + 2 NH4(+) + 16 ADP + 16 phosphate + 6 H(+). In terms of biological role, the key enzymatic reactions in nitrogen fixation are catalyzed by the nitrogenase complex, which has 2 components: the iron protein and the molybdenum-iron protein. This is Nitrogenase iron protein from Frankia casuarinae (strain DSM 45818 / CECT 9043 / HFP020203 / CcI3).